Reading from the N-terminus, the 205-residue chain is MKLDVIKLDGGKAGDIELSEDLFGLEPRADILHRVVRWQRNNAQAGTHKVKTRSETSYSTKKIYRQKGTGGARHGDRNAPIFRKGGIYKGPTPRSHGHDLTKKFRKLGLRHALSAKAKAGELVVIENAEAEGKTAALAKQVANLGWKRALVIDGAAVNEGFARAAKNIEGLDILPSMGANVYDILKRDTLVLTKSAVEALEARLK.

The protein belongs to the universal ribosomal protein uL4 family. In terms of assembly, part of the 50S ribosomal subunit.

Its function is as follows. One of the primary rRNA binding proteins, this protein initially binds near the 5'-end of the 23S rRNA. It is important during the early stages of 50S assembly. It makes multiple contacts with different domains of the 23S rRNA in the assembled 50S subunit and ribosome. Functionally, forms part of the polypeptide exit tunnel. This chain is Large ribosomal subunit protein uL4, found in Ruegeria sp. (strain TM1040) (Silicibacter sp.).